Reading from the N-terminus, the 1099-residue chain is R3H domain-containing protein 1 (1099 aa).

Residues 111–146 (SFEKEEKPSKDEAEKEKASDKLPRKMLSRDSSQEYT) are disordered. Over residues 112-142 (FEKEEKPSKDEAEKEKASDKLPRKMLSRDSS) the composition is skewed to basic and acidic residues. Positions 168 to 231 (RMMLLKLEQE…SVIVNKTSNT (64 aa)) constitute an R3H domain. Residues Ser187 and Ser262 each carry the phosphoserine modification. One can recognise an SUZ domain in the interval 232 to 302 (RIPDQKFNEH…ARDRIFSQDS (71 aa)). The interval 267 to 287 (DNQMRIRLKDDRRSKSIEERE) is disordered. Ser302 carries the post-translational modification Phosphoserine. The interval 331-370 (RVNKDASGRSTNSHQSSTENELKYSEPRPWSSTDSDSSLR) is disordered. 2 stretches are compositionally biased toward polar residues: residues 338 to 349 (GRSTNSHQSSTE) and 360 to 370 (WSSTDSDSSLR). Ser380, Ser381, and Ser393 each carry phosphoserine. 4 disordered regions span residues 387–439 (VLTR…SSHG), 490–537 (QTGQ…AANH), 583–625 (YIMT…HPVS), and 797–825 (EQVQFPRTTSPCSSQQLQGHQCTAGPPPP). Over residues 391–422 (GDSSGSSKSIGRLSKTGSESSGSVGSSTGSLS) the composition is skewed to low complexity. Composition is skewed to pro residues over residues 519–532 (PGPPQPPLPAPPQQ) and 588–611 (APPPHPPPPPPPPPPPPPLPPGQP). Positions 797–817 (EQVQFPRTTSPCSSQQLQGHQ) are enriched in polar residues. Arg929 carries the post-translational modification Asymmetric dimethylarginine; alternate. Arg929 is modified (omega-N-methylarginine; alternate). Positions 941 to 977 (PPAVLHGHIPNQQGQPGSRHGNRGRRQAKKAASTDLG) are disordered. Residues 960 to 969 (HGNRGRRQAK) show a composition bias toward basic residues. Ser973 carries the post-translational modification Phosphoserine.

This chain is R3H domain-containing protein 1 (R3HDM1), found in Homo sapiens (Human).